We begin with the raw amino-acid sequence, 50 residues long: Large ribosomal subunit protein bL36B (50 aa).

The protein belongs to the bacterial ribosomal protein bL36 family.

In Pseudomonas aeruginosa (strain UCBPP-PA14), this protein is Large ribosomal subunit protein bL36B.